A 454-amino-acid chain; its full sequence is tRNA modification GTPase MnmE (454 aa).

Positions 23, 80, and 120 each coordinate (6S)-5-formyl-5,6,7,8-tetrahydrofolate. The TrmE-type G domain maps to 216 to 377; the sequence is GMKVVIAGRP…LRNHLKQSMG (162 aa). Residue N226 participates in K(+) binding. GTP contacts are provided by residues 226 to 231, 245 to 251, 270 to 273, 335 to 338, and 358 to 360; these read NAGKSS, TDIAGTT, DTAG, NKAD, and SAR. S230 is a binding site for Mg(2+). K(+) is bound by residues T245, I247, and T250. T251 provides a ligand contact to Mg(2+). Position 454 (K454) interacts with (6S)-5-formyl-5,6,7,8-tetrahydrofolate.

Belongs to the TRAFAC class TrmE-Era-EngA-EngB-Septin-like GTPase superfamily. TrmE GTPase family. As to quaternary structure, homodimer. Heterotetramer of two MnmE and two MnmG subunits. Requires K(+) as cofactor.

It localises to the cytoplasm. Its function is as follows. Exhibits a very high intrinsic GTPase hydrolysis rate. Involved in the addition of a carboxymethylaminomethyl (cmnm) group at the wobble position (U34) of certain tRNAs, forming tRNA-cmnm(5)s(2)U34. This is tRNA modification GTPase MnmE from Salmonella paratyphi C (strain RKS4594).